The sequence spans 130 residues: Dihydroneopterin aldolase (130 aa).

Substrate-binding positions include Glu-22, Tyr-54, and 73–74 (IE). Lys-100 functions as the Proton donor/acceptor in the catalytic mechanism.

It belongs to the DHNA family.

The catalysed reaction is 7,8-dihydroneopterin = 6-hydroxymethyl-7,8-dihydropterin + glycolaldehyde. It participates in cofactor biosynthesis; tetrahydrofolate biosynthesis; 2-amino-4-hydroxy-6-hydroxymethyl-7,8-dihydropteridine diphosphate from 7,8-dihydroneopterin triphosphate: step 3/4. Functionally, catalyzes the conversion of 7,8-dihydroneopterin to 6-hydroxymethyl-7,8-dihydropterin. This Methylorubrum extorquens (strain ATCC 14718 / DSM 1338 / JCM 2805 / NCIMB 9133 / AM1) (Methylobacterium extorquens) protein is Dihydroneopterin aldolase (folB).